The sequence spans 4579 residues: Sacsin (4579 aa).

One can recognise a Ubiquitin-like domain in the interval 9–84 (VPVTVLPGCV…FVNLQSKGLK (76 aa)). K943 bears the N6-acetyllysine mark. 2 positions are modified to phosphoserine: S1779 and S2511. At T2516 the chain carries Phosphothreonine. S3435 bears the Phosphoserine mark. Disordered stretches follow at residues 4248–4273 (PEESSQSRDSAPSTPTSPTEFLTPGL) and 4279–4298 (LFSGRESHKTSSKHQSPKKL). The segment covering 4254 to 4267 (SRDSAPSTPTSPTE) has biased composition (polar residues). Phosphothreonine is present on T4261. Residue S4264 is modified to Phosphoserine. Positions 4288 to 4298 (TSSKHQSPKKL) are enriched in basic residues. A J domain is found at 4306 to 4393 (ILKEVTSVVE…ASRFQSDKYS (88 aa)). The interval 4405–4427 (ATSHKSERQQQNKEKCPPSAGQT) is disordered. Positions 4406–4420 (TSHKSERQQQNKEKC) are enriched in basic and acidic residues. One can recognise an HEPN domain in the interval 4451–4567 (LRQARANFSA…MRVMECTACI (117 aa)).

Highly expressed in the central nervous system. Also found in skeletal muscle and at low levels in pancreas.

It localises to the cytoplasm. Its function is as follows. Co-chaperone which acts as a regulator of the Hsp70 chaperone machinery and may be involved in the processing of other ataxia-linked proteins. The polypeptide is Sacsin (SACS) (Homo sapiens (Human)).